We begin with the raw amino-acid sequence, 65 residues long: Large ribosomal subunit protein bL35 (65 aa).

Over residues Met-1–Thr-15 the composition is skewed to basic residues. Disordered stretches follow at residues Met-1–Gln-26 and Thr-38–Ala-65. A compositionally biased stretch (basic and acidic residues) spans Arg-45–Asn-54.

The protein belongs to the bacterial ribosomal protein bL35 family.

This chain is Large ribosomal subunit protein bL35, found in Ralstonia pickettii (strain 12J).